The following is a 357-amino-acid chain: Chorismate synthase (357 aa).

Position 47 (R47) interacts with NADP(+). Residues 123-125, G281, 296-300, and R324 contribute to the FMN site; these read RAS and KPTSS.

It belongs to the chorismate synthase family. In terms of assembly, homotetramer. The cofactor is FMNH2.

It catalyses the reaction 5-O-(1-carboxyvinyl)-3-phosphoshikimate = chorismate + phosphate. Its pathway is metabolic intermediate biosynthesis; chorismate biosynthesis; chorismate from D-erythrose 4-phosphate and phosphoenolpyruvate: step 7/7. Its function is as follows. Catalyzes the anti-1,4-elimination of the C-3 phosphate and the C-6 proR hydrogen from 5-enolpyruvylshikimate-3-phosphate (EPSP) to yield chorismate, which is the branch point compound that serves as the starting substrate for the three terminal pathways of aromatic amino acid biosynthesis. This reaction introduces a second double bond into the aromatic ring system. The sequence is that of Chorismate synthase from Chlamydia trachomatis serovar A (strain ATCC VR-571B / DSM 19440 / HAR-13).